The following is a 50-amino-acid chain: uncharacterized protein (50 aa).

A disordered region spans residues 1–50; that stretch reads MKTGFWQQVLPKRAGRRKEHPVQYMPHKKEENATGLMNPSLHTSHSAILK. The segment covering 35–50 has biased composition (polar residues); it reads GLMNPSLHTSHSAILK.

This is an uncharacterized protein from Treponema pallidum (strain Nichols).